The following is a 342-amino-acid chain: Lumican (342 aa).

The first 18 residues, 1–18, serve as a signal peptide directing secretion; that stretch reads MNLGVFPLLLALIGGASS. Tyr-20, Tyr-23, and Tyr-34 each carry sulfotyrosine. The LRRNT domain occupies 32 to 70; it reads ALYGRSSPNCAPECNCPESYPSAMYCDELKLKSVPMVPP. 8 LRR repeats span residues 71-92, 95-118, 121-141, 142-163, 164-185, 189-209, 210-231, and 234-254; these read GIKY…AFEN, DLQW…VFSK, QLKK…PLPK, SLVD…DGLV, NLTF…AALK, SLEY…GLPV, SLLT…YFKR, and ALQY…PGNS. An N-linked (GlcNAc...) (keratan sulfate) asparagine glycan is attached at Asn-92. Asn-131 carries an N-linked (GlcNAc...) (keratan sulfate) asparagine glycan. Asn-164 carries N-linked (GlcNAc...) (keratan sulfate) asparagine glycosylation. A glycan (N-linked (GlcNAc...) (keratan sulfate) asparagine) is linked at Asn-256. LRR repeat units follow at residues 259 to 280 and 281 to 300; these read SLLE…NENL and ENYY…SFCK. Cys-299 and Cys-332 are oxidised to a cystine. Position 308 is a phosphoserine (Ser-308). The LRR 11 repeat unit spans residues 309 to 330; that stretch reads KIKHLRLDGNHITQTSLPPDMY.

This sequence belongs to the small leucine-rich proteoglycan (SLRP) family. SLRP class II subfamily. As to quaternary structure, binds to laminin. In terms of processing, sulfated on tyrosine residue(s). Contains keratan sulfate. In terms of tissue distribution, cornea and other tissues.

The protein resides in the secreted. Its subcellular location is the extracellular space. It is found in the extracellular matrix. The chain is Lumican (LUM) from Bos taurus (Bovine).